Consider the following 243-residue polypeptide: Small ribosomal subunit protein uS3 (243 aa).

The KH type-2 domain maps to 39-107 (MRKFVMSELK…ETHLNIVEVR (69 aa)). The segment at 214 to 243 (ASERRAMEGDAQGPASRDRDRDRDRRRDNA) is disordered. Residues 229 to 243 (SRDRDRDRDRRRDNA) are compositionally biased toward basic and acidic residues.

Belongs to the universal ribosomal protein uS3 family. Part of the 30S ribosomal subunit. Forms a tight complex with proteins S10 and S14.

Binds the lower part of the 30S subunit head. Binds mRNA in the 70S ribosome, positioning it for translation. This chain is Small ribosomal subunit protein uS3, found in Rhizobium johnstonii (strain DSM 114642 / LMG 32736 / 3841) (Rhizobium leguminosarum bv. viciae).